The chain runs to 201 residues: Glycolipid transfer protein (201 aa).

The interval 28–168 is glycolipid transfer protein homology domain; the sequence is IATTQFLEAC…KDFYAKLGDD (141 aa).

In terms of biological role, cargo transport protein that plays a key role in transport and secretion of liamocins, glycolipids (also called heavy oils) composed of a single mannitol or arabitol headgroup linked to either three, four or even six 3,5-dihydroxydecanoic ester tail-groups. This chain is Glycolipid transfer protein, found in Aureobasidium melanogenum (Aureobasidium pullulans var. melanogenum).